The sequence spans 336 residues: Eukaryotic translation initiation factor 3 subunit H (336 aa).

Positions 21-154 (VQCDGLAAMK…LKAYRLTPQA (134 aa)) constitute an MPN domain.

The protein belongs to the eIF-3 subunit H family. In terms of assembly, component of the eukaryotic translation initiation factor 3 (eIF-3) complex.

It localises to the cytoplasm. Its function is as follows. Component of the eukaryotic translation initiation factor 3 (eIF-3) complex, which is involved in protein synthesis of a specialized repertoire of mRNAs and, together with other initiation factors, stimulates binding of mRNA and methionyl-tRNAi to the 40S ribosome. The eIF-3 complex specifically targets and initiates translation of a subset of mRNAs involved in cell proliferation. This is Eukaryotic translation initiation factor 3 subunit H from Aedes aegypti (Yellowfever mosquito).